The following is a 341-amino-acid chain: MKKQIFNEENVSIEKKIEPKQEFDATKVSVEDETEQLTAELIIEKGFTPSRFWIRGLLAVLVLFGLAVIARSVQCLIDSVQAHQWIDLAFAIVFFMVSLAGIGAIIREWYWLVYLRKHQDTQHISKQLLMDELLVTSGQDNVVICHQILADLKSLPHIAVAKQRWQSQLNEAYNAKEVLYLFSENVLKPLDTQVKQIIAKSATENAIIVAVSPLVIVDMLMIAWRNIALVNKISRLYGMRLGYLSRLKLFKMVLTNMVFAGATEMATDVGMDFFSQNLTAKVSLRAAQGIGVGLLTARLGIKAMEFCRPIAFQKEERPKISEIRQQLLIAVKNRFFAKNEA.

3 helical membrane-spanning segments follow: residues 57–77 (LLAVLVLFGLAVIARSVQCLI), 86–106 (IDLAFAIVFFMVSLAGIGAII), and 204–224 (ENAIIVAVSPLVIVDMLMIAW).

The protein belongs to the UPF0283 family.

It is found in the cell inner membrane. The polypeptide is UPF0283 membrane protein HD_1769 (Haemophilus ducreyi (strain 35000HP / ATCC 700724)).